Consider the following 361-residue polypeptide: MLVWLAEYLHQYQSVFNVFSYLTVRAILALFTALLLSLWIGPKVIRRLQILKFGQEIRNDGPDSHLSKKGTPTMGGIMILFAIGVSTLLWANLANPYVWFCLFVLFGYGAVGFVDDYRKITRKNTAGLVARWKYFWLSVIALISAFGMYAIGKDTDATRLVVPFFKDVMPQLGLFYIVLAYFVIVGTGNAVNLTDGLDGLAIMPTVFVAAAFALIAWATGNIEWSKYLYIPYIKHTSELVIFCTAIVGAGLGFLWFNTYPAQLFMGDVGSLALGGVLGTIAVLVRQEFLLVIMGGVFVVETLSVILQVGSYKLRNGKRIFRMAPIHHHYELKGWPEPRVIIRFWIISLMLVLLGLITLKLR.

Transmembrane regions (helical) follow at residues 21–41 (YLTV…LWIG), 74–94 (MGGI…ANLA), 97–117 (YVWF…VDDY), 132–152 (WKYF…YAIG), 168–188 (VMPQ…VGTG), 199–219 (GLAI…AWAT), 239–259 (LVIF…FNTY), 264–284 (FMGD…AVLV), 288–308 (FLLV…ILQV), and 339–359 (VIIR…ITLK).

Belongs to the glycosyltransferase 4 family. MraY subfamily. It depends on Mg(2+) as a cofactor.

The protein resides in the cell inner membrane. It catalyses the reaction UDP-N-acetyl-alpha-D-muramoyl-L-alanyl-gamma-D-glutamyl-meso-2,6-diaminopimeloyl-D-alanyl-D-alanine + di-trans,octa-cis-undecaprenyl phosphate = di-trans,octa-cis-undecaprenyl diphospho-N-acetyl-alpha-D-muramoyl-L-alanyl-D-glutamyl-meso-2,6-diaminopimeloyl-D-alanyl-D-alanine + UMP. The protein operates within cell wall biogenesis; peptidoglycan biosynthesis. Its function is as follows. Catalyzes the initial step of the lipid cycle reactions in the biosynthesis of the cell wall peptidoglycan: transfers peptidoglycan precursor phospho-MurNAc-pentapeptide from UDP-MurNAc-pentapeptide onto the lipid carrier undecaprenyl phosphate, yielding undecaprenyl-pyrophosphoryl-MurNAc-pentapeptide, known as lipid I. The protein is Phospho-N-acetylmuramoyl-pentapeptide-transferase of Histophilus somni (strain 129Pt) (Haemophilus somnus).